The following is a 287-amino-acid chain: MAAKIISGINIAKQIKQNIAQKIAQYIVNGYRRPGLAVILVGADPASQVYVNSKRKSCAEIGIESKYYDLPATITEVELLSIIQRLNSDEMIDGILVQLPLPEHINPIHITEAISSDKDVDGFHPYNVGRLCQKIPTLRSCTSYGVMKLLESTHIDLSGLHAVIVGASNIVGRPMAMELLLAGCTVTITHSRTKNLVDHLSSADIVIVGIGHPNFVKGEWLKQGAIVIDVGINRDTYSKKLVGDVDFLTAEAKASFITPVPGGVGPMTVAMLMQNTLQAYEHHLQAV.

NADP(+) is bound by residues Gly166–Ser168, Ser191, and Ile232.

The protein belongs to the tetrahydrofolate dehydrogenase/cyclohydrolase family. As to quaternary structure, homodimer.

It catalyses the reaction (6R)-5,10-methylene-5,6,7,8-tetrahydrofolate + NADP(+) = (6R)-5,10-methenyltetrahydrofolate + NADPH. The enzyme catalyses (6R)-5,10-methenyltetrahydrofolate + H2O = (6R)-10-formyltetrahydrofolate + H(+). The protein operates within one-carbon metabolism; tetrahydrofolate interconversion. In terms of biological role, catalyzes the oxidation of 5,10-methylenetetrahydrofolate to 5,10-methenyltetrahydrofolate and then the hydrolysis of 5,10-methenyltetrahydrofolate to 10-formyltetrahydrofolate. This is Bifunctional protein FolD from Haemophilus ducreyi (strain 35000HP / ATCC 700724).